Reading from the N-terminus, the 309-residue chain is MTTKKADYIWFNGEMVRWEDAKVHVMSHALHYGTSVFEGIRCYDSHKGPVVFRHREHMQRLRDSAKIYRFPVSQSIDELMEACRDVIRKNNLTSAYIRPLVFVGDVGMGVNPPPGYTTDVIIAAFPWGAYLGAEALDQGIDAMVSSWNRAAPNTIPTAAKAGGNYLSSLLVGSEARRHGYQEGIALDVNGYISEGAGENLFEVKDGVLFTPPFTSSALPGITRDAIIKLAKELGIEVREQVLSRESLYLADEVFMSGTAAEITPVRSVDGIQVGEGRCGPVTKRIQQAFFGLFTGETEDKWGWLDPVNS.

Lysine 160 is subject to N6-(pyridoxal phosphate)lysine.

Belongs to the class-IV pyridoxal-phosphate-dependent aminotransferase family. In terms of assembly, homohexamer. Pyridoxal 5'-phosphate serves as cofactor.

It carries out the reaction L-leucine + 2-oxoglutarate = 4-methyl-2-oxopentanoate + L-glutamate. The catalysed reaction is L-isoleucine + 2-oxoglutarate = (S)-3-methyl-2-oxopentanoate + L-glutamate. It catalyses the reaction L-valine + 2-oxoglutarate = 3-methyl-2-oxobutanoate + L-glutamate. Its pathway is amino-acid biosynthesis; L-isoleucine biosynthesis; L-isoleucine from 2-oxobutanoate: step 4/4. It participates in amino-acid biosynthesis; L-leucine biosynthesis; L-leucine from 3-methyl-2-oxobutanoate: step 4/4. It functions in the pathway amino-acid biosynthesis; L-valine biosynthesis; L-valine from pyruvate: step 4/4. Acts on leucine, isoleucine and valine. The protein is Branched-chain-amino-acid aminotransferase (ilvE) of Salmonella typhi.